The sequence spans 497 residues: Signal recognition particle subunit SRP54 1 (497 aa).

Positions 1–295 (MVLAQLGGSI…DVKPFVSRLL (295 aa)) are G-domain. GTP-binding positions include 108 to 115 (GLQGSGKT), 190 to 194 (DTSGR), and 248 to 251 (TKLD). Positions 296–497 (GMGDLSGLMD…MLGGMGLGGD (202 aa)) are M-domain.

This sequence belongs to the GTP-binding SRP family. SRP54 subfamily. As to quaternary structure, component of a signal recognition particle (SRP) complex that consists of a 7SL RNA molecule of 300 nucleotides and six protein subunits: SRP72, SRP68, SRP54, SRP19, SRP14 and SRP9.

It is found in the cytoplasm. The protein localises to the endoplasmic reticulum. It catalyses the reaction GTP + H2O = GDP + phosphate + H(+). In terms of biological role, component of the signal recognition particle (SRP) complex, a ribonucleoprotein complex that mediates the cotranslational targeting of secretory and membrane proteins to the endoplasmic reticulum (ER). As part of the SRP complex, associates with the SRP receptor (SR) component SRPRA to target secretory proteins to the endoplasmic reticulum membrane. Binds to the signal sequence of presecretory proteins when they emerge from the ribosomes. Displays basal GTPase activity, and stimulates reciprocal GTPase activation of the SR subunit SRPRA. Forms a guanosine 5'-triphosphate (GTP)-dependent complex with the SR subunit SRPRA. SR compaction and GTPase mediated rearrangement of SR drive SRP-mediated cotranslational protein translocation into the ER. Requires the presence of SRP9/SRP14 and/or SRP19 to stably interact with RNA. The chain is Signal recognition particle subunit SRP54 1 (SRP54-1) from Hordeum vulgare (Barley).